The chain runs to 173 residues: Small ribosomal subunit protein uS11m (173 aa).

Belongs to the universal ribosomal protein uS11 family.

It is found in the mitochondrion. The sequence is that of Small ribosomal subunit protein uS11m (RPS11) from Acanthamoeba castellanii (Amoeba).